The following is a 338-amino-acid chain: Large ribosomal subunit protein uL10 (338 aa).

Positions 298 to 308 (AAQQTQTQQST) are enriched in low complexity. The tract at residues 298–338 (AAQQTQTQQSTAEEKKEEKKEEEKKGPSEEEIGSGLASLFG) is disordered. Over residues 309 to 325 (AEEKKEEKKEEEKKGPS) the composition is skewed to basic and acidic residues.

This sequence belongs to the universal ribosomal protein uL10 family. As to quaternary structure, part of the 50S ribosomal subunit. Forms part of the ribosomal stalk which helps the ribosome interact with GTP-bound translation factors. Forms a heptameric L10(L12)2(L12)2(L12)2 complex, where L10 forms an elongated spine to which the L12 dimers bind in a sequential fashion.

Its function is as follows. Forms part of the ribosomal stalk, playing a central role in the interaction of the ribosome with GTP-bound translation factors. The chain is Large ribosomal subunit protein uL10 from Saccharolobus islandicus (strain M.16.27) (Sulfolobus islandicus).